Consider the following 466-residue polypeptide: Asparagine--tRNA ligase (466 aa).

It belongs to the class-II aminoacyl-tRNA synthetase family. Homodimer.

The protein resides in the cytoplasm. It catalyses the reaction tRNA(Asn) + L-asparagine + ATP = L-asparaginyl-tRNA(Asn) + AMP + diphosphate + H(+). This Shewanella amazonensis (strain ATCC BAA-1098 / SB2B) protein is Asparagine--tRNA ligase.